A 412-amino-acid chain; its full sequence is Gamma-glutamyl phosphate reductase (412 aa).

It belongs to the gamma-glutamyl phosphate reductase family.

It localises to the cytoplasm. It carries out the reaction L-glutamate 5-semialdehyde + phosphate + NADP(+) = L-glutamyl 5-phosphate + NADPH + H(+). Its pathway is amino-acid biosynthesis; L-proline biosynthesis; L-glutamate 5-semialdehyde from L-glutamate: step 2/2. Functionally, catalyzes the NADPH-dependent reduction of L-glutamate 5-phosphate into L-glutamate 5-semialdehyde and phosphate. The product spontaneously undergoes cyclization to form 1-pyrroline-5-carboxylate. The chain is Gamma-glutamyl phosphate reductase from Actinobacillus pleuropneumoniae serotype 7 (strain AP76).